We begin with the raw amino-acid sequence, 463 residues long: UDP-N-acetylmuramoylalanine--D-glutamate ligase (463 aa).

126-132 is a binding site for ATP; sequence GSNGKST.

The protein belongs to the MurCDEF family.

The protein localises to the cytoplasm. The enzyme catalyses UDP-N-acetyl-alpha-D-muramoyl-L-alanine + D-glutamate + ATP = UDP-N-acetyl-alpha-D-muramoyl-L-alanyl-D-glutamate + ADP + phosphate + H(+). It functions in the pathway cell wall biogenesis; peptidoglycan biosynthesis. Its function is as follows. Cell wall formation. Catalyzes the addition of glutamate to the nucleotide precursor UDP-N-acetylmuramoyl-L-alanine (UMA). The chain is UDP-N-acetylmuramoylalanine--D-glutamate ligase from Idiomarina loihiensis (strain ATCC BAA-735 / DSM 15497 / L2-TR).